The following is a 413-amino-acid chain: Endoplasmic reticulum resident protein 44.2 (413 aa).

Positions 1-21 (MNLASVLLLLAACHLSVSVNG) are cleaved as a signal peptide. The Thioredoxin domain occupies 22–136 (QEHKEAIELS…LTNFVKFQLS (115 aa)). A disulfide bridge connects residues Cys-184 and Cys-233. Asn-264 carries N-linked (GlcNAc...) asparagine glycosylation. Residues 367-413 (KAARGITDDHEAQAPSTRPIDTTPPPSVFKELKPSDKRYSILQKSEL) form a disordered region. Residues 396-413 (KELKPSDKRYSILQKSEL) show a composition bias toward basic and acidic residues. Positions 410–413 (KSEL) match the Prevents secretion from ER motif.

The protein localises to the endoplasmic reticulum lumen. This is Endoplasmic reticulum resident protein 44.2 from Caenorhabditis elegans.